Here is a 676-residue protein sequence, read N- to C-terminus: Envelope glycoprotein (676 aa).

The signal sequence occupies residues 1–32 (MGVTGILQLPRDRFKRTSFFLWVIILFQRTFS). Topologically, residues 33 to 650 (IPLGVIHNST…NDNWWTGWRQ (618 aa)) are extracellular. Asn-40 is a glycosylation site (N-linked (GlcNAc...) asparagine; by host). 5 disulfide bridges follow: Cys-53–Cys-609, Cys-108–Cys-135, Cys-121–Cys-147, Cys-511–Cys-556, and Cys-601–Cys-608. Residues 54 to 201 (RDKLSSTNQL…DFFSSHPLRE (148 aa)) form a receptor-binding region. N-linked (GlcNAc...) asparagine; by host glycans are attached at residues Asn-204, Asn-228, Asn-238, Asn-257, Asn-268, Asn-296, Asn-317, Asn-333, Asn-346, Asn-386, and Asn-413. The mucin-like region stretch occupies residues 305 to 485 (ELSFTVVSNG…SGKLGLITNT (181 aa)). Polar residues predominate over residues 315–335 (AKNISGQSPARTSSDPGTNTT). The tract at residues 315–337 (AKNISGQSPARTSSDPGTNTTTE) is disordered. Polar residues predominate over residues 373-391 (TSPQSLTTKPGPDNSTHNT). Disordered stretches follow at residues 373–392 (TSPQSLTTKPGPDNSTHNTP) and 402–479 (TQVE…SGKL). Residues 414-432 (DSTASDTPSATTAAGPPKA) are compositionally biased toward low complexity. A compositionally biased stretch (polar residues) spans 433–464 (ENTNTSKSTDFLDPATTTSPQNHSETAGNNNT). 3 N-linked (GlcNAc...) asparagine; by host glycosylation sites follow: Asn-436, Asn-454, and Asn-462. The tract at residues 524–539 (GAAIGLAWIPYFGPAA) is fusion peptide. A coiled-coil region spans residues 554-595 (LICGLRQLANETTQALQLFLRATTELRTFSILNRKAIDFLLQ). A glycan (N-linked (GlcNAc...) asparagine; by host) is linked at Asn-563. Residues 615–634 (WTKNITDKIDQIIHDFVDKT) adopt a coiled-coil conformation. The N-linked (GlcNAc...) asparagine; by host glycan is linked to Asn-618. The helical transmembrane segment at 651–671 (WIPAGIGVTGVIIAVIALFCI) threads the bilayer. Positions 660 to 664 (GVIIA) match the Important role for host BST2/tetherin antagonism motif. S-palmitoyl cysteine; by host attachment occurs at residues Cys-670 and Cys-672. Topologically, residues 672–676 (CKFVF) are cytoplasmic.

Belongs to the filoviruses glycoprotein family. As to quaternary structure, homotrimer; each monomer consists of a GP1 and a GP2 subunit linked by disulfide bonds. The resulting peplomers (GP1,2) protrude from the virus surface as spikes. Interacts with host integrin alpha-V/ITGAV. Interacts with host CLEC10A. Also binds to host CD209 and CLEC4M/DC-SIGN(R). Interacts with host FOLR1. Interacts with BST2; this interaction inhibits the antiviral effect of BST2 and this allows viral release from infected cells. Interacts with host FCN1; this interaction enhances viral entry. Interacts with host TLR4; this interaction induces cell death in T-lymphocytes or proinflammatory cytokines and SOCS1 production in monocytes. In terms of assembly, interacts with host entry receptor NPC1. GP1 and GP2delta are part of GP1,2delta soluble complexes released by ectodomain shedding. In terms of processing, the signal peptide region modulates GP's high mannose glycosylation, thereby determining the efficiency of the interactions with DC-SIGN(R). Post-translationally, N-glycosylated. Glycosylated; glycosylation is essential for the activation of dendritic cells and macrophages. In terms of processing, O-glycosylated in the mucin-like region. Post-translationally, palmitoylation is not required for its function. Specific enzymatic cleavages in vivo yield mature proteins. The precursor is processed into GP1 and GP2 by host cell furin in the trans Golgi, and maybe by other host proteases, to yield the mature GP1 and GP2 proteins. The cleavage site corresponds to the furin optimal cleavage sequence [KR]-X-[KR]-R. This cleavage does not seem to be required for function. After the internalization of the virus into cell endosomes, GP1 C-terminus is removed by the endosomal proteases cathepsin B, cathepsin L, or both, leaving a 19-kDa N-terminal fragment which is further digested by cathepsin B. This cleaved 19-kDa GP1 can then bind to the host entry receptor NPC1. Proteolytic processing of GP1,2 by host ADAM17 can remove the transmembrane anchor of GP2 and leads to shedding of complexes consisting in GP1 and truncated GP2 (GP1,2delta).

It is found in the virion membrane. The protein resides in the host cell membrane. It localises to the secreted. Trimeric GP1,2 complexes form the virion surface spikes and mediate the viral entry processes, with GP1 acting as the receptor-binding subunit and GP2 as the membrane fusion subunit. At later times of infection, down-regulates the expression of various host cell surface molecules that are essential for immune surveillance and cell adhesion. Down-modulates several integrins including ITGA1, ITGA2, ITGA3, ITGA4, ITGA5, ITGA6, ITGAV and ITGB1. This decrease in cell adhesion molecules may lead to cell detachment, contributing to the disruption of blood vessel integrity and hemorrhages developed during infection (cytotoxicity). Interacts with host TLR4 and thereby stimulates the differentiation and activation of monocytes leading to bystander death of T-lymphocytes. Down-regulates as well the function of host natural killer cells. Counteracts the antiviral effect of host BST2/tetherin that restricts release of progeny virions from infected cells. However, cooperates with VP40 and host BST2 to activate canonical NF-kappa-B pathway in a manner dependent on neddylation. In terms of biological role, functions as a decoy for anti-GP1,2 antibodies thereby contributing to viral immune evasion. Interacts and activates host macrophages and dendritic cells inducing up-regulation of cytokine transcription. This effect is mediated throught activation of host TLR4. Functionally, responsible for binding to the receptor(s) on target cells. Interacts with CD209/DC-SIGN and CLEC4M/DC-SIGNR which act as cofactors for virus entry into dendritic cells (DCs) and endothelial cells. Binding to the macrophage specific lectin CLEC10A also seems to enhance virus infectivity. Interaction with FOLR1/folate receptor alpha may be a cofactor for virus entry in some cell types, although results are contradictory. Members of the Tyro3 receptor tyrosine kinase family also seem to be cell entry factors in filovirus infection. Once attached, the virions are internalized through clathrin-dependent endocytosis and/or macropinocytosis. After internalization of the virus into the endosomes of the host cell, proteolysis of GP1 by two cysteine proteases, CTSB/cathepsin B and CTSL/cathepsin L removes the glycan cap and allows GP1 binding to the host entry receptor NPC1. NPC1-binding, Ca(2+) and acidic pH induce a conformational change of GP2, which unmasks its fusion peptide and permit membranes fusion. Its function is as follows. Acts as a class I viral fusion protein. Under the current model, the protein has at least 3 conformational states: pre-fusion native state, pre-hairpin intermediate state, and post-fusion hairpin state. During viral and target cell membrane fusion, the coiled coil regions (heptad repeats) assume a trimer-of-hairpins structure, positioning the fusion peptide in close proximity to the C-terminal region of the ectodomain. The formation of this structure appears to drive apposition and subsequent fusion of viral and target cell membranes. Responsible for penetration of the virus into the cell cytoplasm by mediating the fusion of the membrane of the endocytosed virus particle with the endosomal membrane. Low pH in endosomes induces an irreversible conformational change in GP2, releasing the fusion hydrophobic peptide. In Epomops franqueti (Franquet's epauletted fruit bat), this protein is Envelope glycoprotein (GP).